We begin with the raw amino-acid sequence, 448 residues long: Probable sodium-coupled neutral amino acid transporter 6 (448 aa).

Composition is skewed to polar residues over residues 1–12 (MQASDSSINTLD) and 26–36 (LLANSPQRRSS). The interval 1–36 (MQASDSSINTLDGHQVSAGRDESTPLLANSPQRRSS) is disordered. A run of 5 helical transmembrane segments spans residues 40–60 (SFGF…ILGL), 69–89 (ILGF…SIHL), 117–137 (LVAC…LFII), 164–184 (LLII…KIGF), and 185–205 (LGYT…VIVI). C212 and C232 are disulfide-bonded. N218 and N228 each carry an N-linked (GlcNAc...) asparagine glycan. 6 helical membrane passes run 244 to 264 (AFAL…LPIY), 281 to 301 (VGIA…YLTF), 321 to 341 (VLII…VPLI), 365 to 385 (ILVT…VPDM), 388 to 408 (VFGV…PGLF), and 425 to 445 (ACGL…LIIM).

This sequence belongs to the amino acid/polyamine transporter 2 family.

It is found in the cell membrane. Functionally, probable sodium-dependent amino acid/proton antiporter, could be a neuronal transporter for glutamate. This chain is Probable sodium-coupled neutral amino acid transporter 6 (slc38a6), found in Xenopus tropicalis (Western clawed frog).